A 241-amino-acid polypeptide reads, in one-letter code: Triosephosphate isomerase (241 aa).

9–11 contributes to the substrate binding site; it reads NWK. Histidine 96 (electrophile) is an active-site residue. Glutamate 165 (proton acceptor) is an active-site residue. Substrate is bound by residues glycine 171, serine 204, and 225 to 226; that span reads GG.

Belongs to the triosephosphate isomerase family. Homodimer.

The protein localises to the cytoplasm. The enzyme catalyses D-glyceraldehyde 3-phosphate = dihydroxyacetone phosphate. It functions in the pathway carbohydrate biosynthesis; gluconeogenesis. The protein operates within carbohydrate degradation; glycolysis; D-glyceraldehyde 3-phosphate from glycerone phosphate: step 1/1. In terms of biological role, involved in the gluconeogenesis. Catalyzes stereospecifically the conversion of dihydroxyacetone phosphate (DHAP) to D-glyceraldehyde-3-phosphate (G3P). The chain is Triosephosphate isomerase from Nostoc sp. (strain PCC 7120 / SAG 25.82 / UTEX 2576).